We begin with the raw amino-acid sequence, 1165 residues long: DNA-directed RNA polymerase subunit beta (1165 aa).

This sequence belongs to the RNA polymerase beta chain family. In terms of assembly, the RNAP catalytic core consists of 2 alpha, 1 beta, 1 beta' and 1 omega subunit. When a sigma factor is associated with the core the holoenzyme is formed, which can initiate transcription.

The enzyme catalyses RNA(n) + a ribonucleoside 5'-triphosphate = RNA(n+1) + diphosphate. Functionally, DNA-dependent RNA polymerase catalyzes the transcription of DNA into RNA using the four ribonucleoside triphosphates as substrates. This is DNA-directed RNA polymerase subunit beta from Leifsonia xyli subsp. xyli (strain CTCB07).